A 412-amino-acid chain; its full sequence is MNWKEKVKTKFYSCDRFVRFVIQHFIQDDCTYIASALAFTSLLAVVPLMSVGLAIFSSFPVFQGLAEPVQNFIFDNFVPATGKIVQSYLQQFTSQVSKLSIWGVVFLIFTALLVMFTIERAMNKIWRVSSSRHGVSAFLLYWAIISLAPVLLGLSLAASSYLFSMPILADHRAPYTILHYSPFFLSLIGFTFLYVVVPNCPVKIRHAFWGGLVAAILFESAKHAFAYYLIRYNTYELLYGAFATVPIFFIWVYWVWIITLLGAEISYAFSVHHQRRGGKSLDGFSHALLWLHQLWIAQQHGKGLSFNDLVDASKQPFAVDVDEMINALIYHELIHATADGHYMLSRDLSHVTLYDLTQLLPYRLPTHLELQYSKASLSEQWRAAFKRHNEELKKSLDINLEELFKKTGTILK.

The next 6 helical transmembrane spans lie at 36–56 (ALAF…LAIF), 99–119 (LSIW…FTIE), 137–157 (AFLL…LSLA), 177–197 (ILHY…YVVV), 210–230 (GGLV…YYLI), and 241–261 (AFAT…ITLL).

It belongs to the UPF0761 family.

The protein localises to the cell inner membrane. This chain is UPF0761 membrane protein LPC_2650, found in Legionella pneumophila (strain Corby).